A 314-amino-acid polypeptide reads, in one-letter code: R2-like ligand binding oxidase (314 aa).

3 residues coordinate Mn(2+): glutamate 68, glutamate 101, and histidine 104. The segment at residues 71 to 162 (VTEDIQPFMS…AAQVRASVTY (92 aa)) is a cross-link (3-(O4'-tyrosyl)-valine (Val-Tyr)). A Fe cation-binding site is contributed by glutamate 101. Fe cation-binding residues include glutamate 167, glutamate 202, and histidine 205.

This sequence belongs to the ribonucleoside diphosphate reductase small chain family. R2-like ligand binding oxidase subfamily. As to quaternary structure, homodimer. Fe cation is required as a cofactor. The cofactor is Mn(2+).

In terms of biological role, probable oxidase that might be involved in lipid metabolism. The protein is R2-like ligand binding oxidase of Mycobacterium bovis (strain ATCC BAA-935 / AF2122/97).